The chain runs to 132 residues: Translation initiation factor 5A (132 aa).

K36 carries the hypusine modification.

The protein belongs to the eIF-5A family.

The protein resides in the cytoplasm. Its function is as follows. Functions by promoting the formation of the first peptide bond. This is Translation initiation factor 5A (eIF5A) from Pyrobaculum neutrophilum (strain DSM 2338 / JCM 9278 / NBRC 100436 / V24Sta) (Thermoproteus neutrophilus).